The following is a 173-amino-acid chain: Shikimate kinase 2 (173 aa).

12-17 is a binding site for ATP; that stretch reads GCGKTT. Mg(2+) is bound by residues threonine 16 and aspartate 32. Aspartate 34, arginine 58, and glycine 79 together coordinate substrate. Residues 112 to 126 form an LID domain region; sequence EENPQDNQRPTLTGR. Position 120 (arginine 120) interacts with ATP. Arginine 139 provides a ligand contact to substrate. An ATP-binding site is contributed by glutamine 155.

Belongs to the shikimate kinase family. AroL subfamily. Monomer. Mg(2+) serves as cofactor.

The protein localises to the cytoplasm. It carries out the reaction shikimate + ATP = 3-phosphoshikimate + ADP + H(+). It participates in metabolic intermediate biosynthesis; chorismate biosynthesis; chorismate from D-erythrose 4-phosphate and phosphoenolpyruvate: step 5/7. Its function is as follows. Catalyzes the specific phosphorylation of the 3-hydroxyl group of shikimic acid using ATP as a cosubstrate. This chain is Shikimate kinase 2, found in Pectobacterium carotovorum subsp. carotovorum (strain PC1).